The sequence spans 242 residues: uncharacterized protein (242 aa).

Disordered stretches follow at residues 16-121 (GLYK…GAMA) and 152-178 (PVRP…TQPV). Composition is skewed to pro residues over residues 50–64 (PRPP…PSPA) and 97–113 (EPRP…PPGP). Residues 157–172 (KLPKGKGRLRRPRQSR) show a composition bias toward basic residues. Thr175 is modified (phosphothreonine). Phosphoserine is present on residues Ser192, Ser206, Ser216, Ser232, and Ser238. The segment at 215 to 242 (QSLSLQREPLGSCKLRNSLDSSDSDSAL) is disordered. Low complexity predominate over residues 232–242 (SLDSSDSDSAL).

The protein localises to the cytoplasm. This is an uncharacterized protein from Rattus norvegicus (Rat).